A 515-amino-acid chain; its full sequence is Sugar transport protein MST4 (515 aa).

Residues 1 to 17 (MAGGFSVSGSGVEFEAK) lie on the Cytoplasmic side of the membrane. A helical transmembrane segment spans residues 18 to 38 (ITPIVIISCIMAATGGLMFGY). Topologically, residues 39 to 78 (DVGISGGVTSMDDFLREFFPTVLKKKHEDKESNYCKYDNQ) are extracellular. A helical membrane pass occupies residues 79 to 99 (GLQLFTSSLYLAGLTATFFAS). Residues 100–108 (YTTRRLGRR) lie on the Cytoplasmic side of the membrane. Residues 109–129 (LTMLIAGVFFIVGVIFNGAAQ) traverse the membrane as a helical segment. The Extracellular segment spans residues 130 to 138 (NLAMLIVGR). The chain crosses the membrane as a helical span at residues 139 to 159 (ILLGCGVGFANQAVPLFLSEI). At 160–165 (APTRIR) the chain is on the cytoplasmic side. A helical transmembrane segment spans residues 166–186 (GGLNILFQLNVTIGILFANLV). Residues 187-199 (NYGTAKIHPWGWR) lie on the Extracellular side of the membrane. A helical transmembrane segment spans residues 200–220 (LSLSLAGIPAALLTLGALFVV). At 221–280 (DTPNSLIERGRLEEGKAVLRKIRGTDNVEPEFNEIVEASRVAQEVKHPFRNLLQRRNRPQ) the chain is on the cytoplasmic side. Residues 281 to 301 (LVIAVLLQIFQQFTGINAIMF) traverse the membrane as a helical segment. Over 302 to 315 (YAPVLFNTLGFKTD) the chain is Extracellular. The chain crosses the membrane as a helical span at residues 316 to 336 (ASLYSAVITGAVNVLSTLVSV). Residues 337–347 (YSVDRVGRRML) are Cytoplasmic-facing. Residues 348–368 (LLEAGVQMFLSQVAIAVVLGI) form a helical membrane-spanning segment. Residues 369–379 (KVTDRSDNLGH) are Extracellular-facing. The chain crosses the membrane as a helical span at residues 380-400 (GWAIMVVVMVCTFVSSFAWSW). Residues 401–422 (GPLGWLIPSETFPLETRSAGQS) lie on the Cytoplasmic side of the membrane. The helical transmembrane segment at 423-443 (VTVCVNLLFTFVIAQAFLSML) threads the bilayer. At 444-448 (CHLKY) the chain is on the extracellular side. A helical transmembrane segment spans residues 449 to 469 (AIFAFFSAWVVVMSLFVLFFL). Residues 470-515 (PETKNIPIEEMTERVWKQHWFWKRFMDDADKHHVVPNGGKSNGATV) are Cytoplasmic-facing.

This sequence belongs to the major facilitator superfamily. Sugar transporter (TC 2.A.1.1) family. As to expression, expressed in roots, shoots, leaf blades, leaf sheaths, anthers, ovaries and embryos.

It localises to the membrane. Functionally, mediates active uptake of hexoses by sugar:proton symport. Can transport glucose, fructose, mannose and galactose. Can transport xylose and ribose. The sequence is that of Sugar transport protein MST4 from Oryza sativa subsp. japonica (Rice).